A 194-amino-acid chain; its full sequence is Imidazoleglycerol-phosphate dehydratase (194 aa).

It belongs to the imidazoleglycerol-phosphate dehydratase family.

It is found in the cytoplasm. It carries out the reaction D-erythro-1-(imidazol-4-yl)glycerol 3-phosphate = 3-(imidazol-4-yl)-2-oxopropyl phosphate + H2O. The protein operates within amino-acid biosynthesis; L-histidine biosynthesis; L-histidine from 5-phospho-alpha-D-ribose 1-diphosphate: step 6/9. The protein is Imidazoleglycerol-phosphate dehydratase of Thermus thermophilus (strain ATCC BAA-163 / DSM 7039 / HB27).